A 107-amino-acid chain; its full sequence is Antimicrobial peptide damicornin (107 aa).

The first 22 residues, 1–22 (MKVLVILFGAMLVLMEFQKASA), serve as a signal peptide directing secretion. Residues 23 to 67 (ATLLEDFDDDDDLLDDGGDFDLEANSDASSGNGNDSNDAVPEKRR) constitute a propeptide that is removed on maturation. The span at 37 to 46 (DDGGDFDLEA) shows a compositional bias: acidic residues. Residues 37–62 (DDGGDFDLEANSDASSGNGNDSNDAV) are disordered. Positions 47-61 (NSDASSGNGNDSNDA) are enriched in low complexity. Cystine bridges form between C69–C105, C78–C99, and C85–C103. Residue R106 is modified to Arginine amide.

The protein belongs to the coral AMP family. As to expression, is specifically expressed in the granular cells of the ectoderm.

The protein resides in the cytoplasm. Its subcellular location is the stress granule. The protein localises to the secreted. Cationic peptide with probable antimicrobial activity against coral pathogens. Shows in vitro activity against Gram-positive bacteria and the filamentous fungus F.oxysporum (MIC=1.25 uM). Gram-positive bacteria tested are B.megaterium (MIC=20 uM), S.aureus (MIC=5 uM), M. luteus (MIC=1.25 uM), B.stationis (MIC=10 uM), M.maritypicum (MIC=20 uM). Has no or little effect against Gram-negative bacteria (the coral pathogen V.coralliilyticus (MIC&gt;20 uM), V.aesturianus (MIC&gt;20 uM), V.shiloi (MIC&gt;20 uM), and E.coli (MIC=10 uM)). Has no hemolytic activity against sheep erythrocytes. The protein is Antimicrobial peptide damicornin of Pocillopora damicornis (Cauliflower coral).